A 1577-amino-acid chain; its full sequence is Pentafunctional AROM polypeptide (1577 aa).

The 3-dehydroquinate synthase stretch occupies residues 1–384; it reads MSMKMADPTK…YEPKASVVSN (384 aa). Residues 48–50, 85–88, 116–118, and Asp-121 contribute to the NAD(+) site; these read DTN, ENSK, and GGV. Residue Arg-132 coordinates 7-phospho-2-dehydro-3-deoxy-D-arabino-heptonate. 141–142 contacts NAD(+); sequence TT. The 7-phospho-2-dehydro-3-deoxy-D-arabino-heptonate site is built by Asp-148 and Lys-154. NAD(+) is bound at residue Lys-163. A 7-phospho-2-dehydro-3-deoxy-D-arabino-heptonate-binding site is contributed by Asn-164. NAD(+) is bound by residues 181–184 and Asn-192; that span reads FIDT. Residue Glu-196 coordinates Zn(2+). Residues 196-199 and Lys-250 contribute to the 7-phospho-2-dehydro-3-deoxy-D-arabino-heptonate site; that span reads EVIK. Glu-260 acts as the Proton acceptor; for 3-dehydroquinate synthase activity in catalysis. Residues 264-268 and His-271 contribute to the 7-phospho-2-dehydro-3-deoxy-D-arabino-heptonate site; that span reads RNLLN. His-271 serves as a coordination point for Zn(2+). His-275 (proton acceptor; for 3-dehydroquinate synthase activity) is an active-site residue. Residues His-287 and Lys-356 each coordinate 7-phospho-2-dehydro-3-deoxy-D-arabino-heptonate. His-287 is a binding site for Zn(2+). The tract at residues 397–842 is EPSP synthase; that stretch reads VIPGVPKSLN…WDALKQKFGV (446 aa). Cys-824 acts as the For EPSP synthase activity in catalysis. Residues 864-1056 form a shikimate kinase region; sequence NASVIIIGMR…RKKRLSFFVS (193 aa). Residue 871–878 participates in ATP binding; the sequence is GMRGAGKT. The segment at 1057 to 1277 is 3-dehydroquinase; sequence LTLPDLRDTG…AAPGQLSAAE (221 aa). His-1180 functions as the Proton acceptor; for 3-dehydroquinate dehydratase activity in the catalytic mechanism. The active-site Schiff-base intermediate with substrate; for 3-dehydroquinate dehydratase activity is Lys-1208. The tract at residues 1290 to 1577 is shikimate dehydrogenase; that stretch reads AKKFAIFGKP…RNAVLGTNEK (288 aa).

The protein in the N-terminal section; belongs to the sugar phosphate cyclases superfamily. Dehydroquinate synthase family. This sequence in the 2nd section; belongs to the EPSP synthase family. In the 3rd section; belongs to the shikimate kinase family. It in the 4th section; belongs to the type-I 3-dehydroquinase family. The protein in the C-terminal section; belongs to the shikimate dehydrogenase family. Homodimer. It depends on Zn(2+) as a cofactor.

Its subcellular location is the cytoplasm. The enzyme catalyses 7-phospho-2-dehydro-3-deoxy-D-arabino-heptonate = 3-dehydroquinate + phosphate. The catalysed reaction is 3-dehydroquinate = 3-dehydroshikimate + H2O. It carries out the reaction shikimate + NADP(+) = 3-dehydroshikimate + NADPH + H(+). It catalyses the reaction shikimate + ATP = 3-phosphoshikimate + ADP + H(+). The enzyme catalyses 3-phosphoshikimate + phosphoenolpyruvate = 5-O-(1-carboxyvinyl)-3-phosphoshikimate + phosphate. It participates in metabolic intermediate biosynthesis; chorismate biosynthesis; chorismate from D-erythrose 4-phosphate and phosphoenolpyruvate: step 2/7. Its pathway is metabolic intermediate biosynthesis; chorismate biosynthesis; chorismate from D-erythrose 4-phosphate and phosphoenolpyruvate: step 3/7. The protein operates within metabolic intermediate biosynthesis; chorismate biosynthesis; chorismate from D-erythrose 4-phosphate and phosphoenolpyruvate: step 4/7. It functions in the pathway metabolic intermediate biosynthesis; chorismate biosynthesis; chorismate from D-erythrose 4-phosphate and phosphoenolpyruvate: step 5/7. It participates in metabolic intermediate biosynthesis; chorismate biosynthesis; chorismate from D-erythrose 4-phosphate and phosphoenolpyruvate: step 6/7. In terms of biological role, the AROM polypeptide catalyzes 5 consecutive enzymatic reactions in prechorismate polyaromatic amino acid biosynthesis. The protein is Pentafunctional AROM polypeptide of Talaromyces stipitatus (strain ATCC 10500 / CBS 375.48 / QM 6759 / NRRL 1006) (Penicillium stipitatum).